A 76-amino-acid polypeptide reads, in one-letter code: Sulfur carrier protein TusA (76 aa).

Catalysis depends on cysteine 15, which acts as the Cysteine persulfide intermediate.

This sequence belongs to the sulfur carrier protein TusA family. In terms of assembly, mostly a monomer, a small portion forms homodimer via intermolecular disulfide bonds. Tightly interacts with DsrEFH.

Its subcellular location is the cytoplasm. It participates in energy metabolism; sulfur metabolism. In terms of biological role, sulfur carrier protein involved in sulfur trafficking for oxidative dissimilatory sulfur metabolism. Component of a sulfur relay system that starts with the sulfur-mobilizing rhodanese-like protein Rhd_2599 (Alvin_2599), which transfers the sulfur from a low-molecular-weight thiol, maybe glutathione, to the TusA protein (Alvin_2600); TusA serves as the sulfur donor for DsrEFH, which persulfurates DsrC; persulfurated DsrC very probably serves as a direct substrate for reverse-acting sulfite reductase, DsrAB. TusA seems to be not exclusively dedicated to sulfur oxidation and may have other important roles in the cell. Might also act as a sulfur mediator required for 2-thiouridine formation of tRNA. The chain is Sulfur carrier protein TusA from Allochromatium vinosum (strain ATCC 17899 / DSM 180 / NBRC 103801 / NCIMB 10441 / D) (Chromatium vinosum).